The primary structure comprises 348 residues: Rhodopsin (348 aa).

N-acetylmethionine is present on methionine 1. Topologically, residues 1–36 (MNGTEGPNFYVPFSNKTGVVRSPFEYPQYYLAEPWQ) are extracellular. Residues asparagine 2 and asparagine 15 are each glycosylated (N-linked (GlcNAc...) asparagine). A helical membrane pass occupies residues 37–61 (FSMLAAYMFLLIVLGFPINFLTLYV). Over 62 to 73 (TVQHKKLRTPLN) the chain is Cytoplasmic. Residues 74–96 (YILLNLAVADLFMVFGGFTTTLY) traverse the membrane as a helical segment. The Extracellular portion of the chain corresponds to 97 to 110 (TSLHGYFVFGPTGC). An intrachain disulfide couples cysteine 110 to cysteine 187. A helical membrane pass occupies residues 111-133 (NLEGFFATLGGEIALWSLVVLAI). The 'Ionic lock' involved in activated form stabilization motif lies at 134–136 (ERY). Residues 134–152 (ERYVVVCKPMSNFRFGENH) are Cytoplasmic-facing. A helical transmembrane segment spans residues 153–173 (AIMGVGLTWVMALACAAPPLV). Residues 174–202 (GWSRYIPEGMQCSCGIDYYTLKPEVNNES) are Extracellular-facing. Glutamate 201 is a binding site for Zn(2+). Residues 203-224 (FVIYMFVVHFTIPMIVIFFCYG) form a helical membrane-spanning segment. The Cytoplasmic portion of the chain corresponds to 225 to 252 (QLVFTVKEAAAQQQESATTQKAEKEVTR). The helical transmembrane segment at 253–274 (MVIIMVIAFLICWVPYASVAFY) threads the bilayer. The Extracellular portion of the chain corresponds to 275 to 286 (IFTHQGFNFGPI). Glutamine 279 provides a ligand contact to Zn(2+). A helical membrane pass occupies residues 287–308 (FMTLPAFFAKAAAIYNPVIYIM). Lysine 296 carries the post-translational modification N6-(retinylidene)lysine. At 309-348 (MNKQFRTCMITTLCCGKNPLGDDEVSASASKTETSQVAPA) the chain is on the cytoplasmic side. 2 S-palmitoyl cysteine lipidation sites follow: cysteine 322 and cysteine 323. Positions 330–348 (DDEVSASASKTETSQVAPA) are interaction with SAG. Residues serine 334 and serine 338 each carry the phosphoserine modification. Phosphothreonine occurs at positions 340 and 342. The residue at position 343 (serine 343) is a Phosphoserine.

Belongs to the G-protein coupled receptor 1 family. Opsin subfamily. Homodimer. Interacts (phosphorylated form) with SAG. Interacts with GNAT1. Interacts with GNAT3. SAG and G-proteins compete for a common binding site. Interacts with GRK1. Interacts with PRCD; the interaction promotes PRCD stability. Forms a complex with ASAP1 and ARF4. Forms a complex with ASAP1, RAB11A, Rabin8/RAB3IP, ARF4 and RAB11FIP3; the complex regulates Golgi-to-cilia rhodopsin/RHO transport in photoreceptors. Phosphorylated on some or all of the serine and threonine residues present in the C-terminal region. Post-translationally, contains one covalently linked retinal chromophore. Upon light absorption, the covalently bound 11-cis-retinal is converted to all-trans-retinal. After hydrolysis of the Schiff base and release of the covalently bound all-trans-retinal, active rhodopsin is regenerated by binding of a fresh molecule of 11-cis-retinal.

The protein resides in the membrane. Its subcellular location is the cell projection. The protein localises to the cilium. It localises to the photoreceptor outer segment. In terms of biological role, photoreceptor required for image-forming vision at low light intensity. Required for photoreceptor cell viability after birth. Light-induced isomerization of 11-cis to all-trans retinal triggers a conformational change that activates signaling via G-proteins. Subsequent receptor phosphorylation mediates displacement of the bound G-protein alpha subunit by the arrestin SAG and terminates signaling. This chain is Rhodopsin (RHO), found in Pagophilus groenlandicus (Harp seal).